The primary structure comprises 338 residues: Ornithine carbamoyltransferase (338 aa).

Carbamoyl phosphate contacts are provided by residues R116 and 143–146; that span reads HPCQ. L-ornithine contacts are provided by residues N174, D235, and 239 to 240; that span reads SM. 2 residues coordinate carbamoyl phosphate: C275 and R303.

This sequence belongs to the aspartate/ornithine carbamoyltransferase superfamily. OTCase family.

Its subcellular location is the cytoplasm. The catalysed reaction is carbamoyl phosphate + L-ornithine = L-citrulline + phosphate + H(+). Its pathway is amino-acid biosynthesis; L-arginine biosynthesis; L-arginine from L-ornithine and carbamoyl phosphate: step 1/3. In terms of biological role, reversibly catalyzes the transfer of the carbamoyl group from carbamoyl phosphate (CP) to the N(epsilon) atom of ornithine (ORN) to produce L-citrulline. The chain is Ornithine carbamoyltransferase from Chlorobaculum tepidum (strain ATCC 49652 / DSM 12025 / NBRC 103806 / TLS) (Chlorobium tepidum).